The sequence spans 24 residues: Brevinin-1PTb (24 aa).

The cysteines at positions 18 and 24 are disulfide-linked.

Expressed by the skin glands.

It localises to the secreted. Functionally, has antibacterial activity against the Gram-positive bacterium S.aureus ATCC 25923 and the Gram-negative bacterium E.coli ATCC 25726. The polypeptide is Brevinin-1PTb (Pulchrana picturata (Malaysian fire frog)).